The sequence spans 68 residues: Conotoxin Lp5.2 (68 aa).

The first 19 residues, 1–19 (MRCVPVFIILLLLASPAAP), serve as a signal peptide directing secretion. A propeptide spanning residues 20 to 54 (KSLETRIQNDLIRAGLTDADLKTEKGFLSGLLNVA) is cleaved from the precursor.

Belongs to the conotoxin T superfamily. In terms of processing, contains 2 disulfide bonds that can be either 'C1-C3, C2-C4' or 'C1-C4, C2-C3', since these disulfide connectivities have been observed for conotoxins with cysteine framework V (for examples, see AC P0DQQ7 and AC P81755). Expressed by the venom duct.

It localises to the secreted. This is Conotoxin Lp5.2 from Conus leopardus (Leopard cone).